A 401-amino-acid chain; its full sequence is ADP-forming sulfoacetate-CoA ligase subunit SqwK (401 aa).

Positions 9 to 217 constitute an ATP-grasp domain; sequence KTVFSEHKIP…DNSVFRQPRF (209 aa). Residue 35–96 coordinates ATP; that stretch reads KSVGFPSVVK…EEAVHIDKEI (62 aa). Mg(2+)-binding residues include Glu185 and Asn187.

It belongs to the succinate/malate CoA ligase beta subunit family. Forms a complex with SqwL. Requires Mg(2+) as cofactor.

The catalysed reaction is sulfoacetate + ATP + CoA = sulfoacetyl-CoA + ADP + phosphate. In terms of biological role, part of a variant of the sulfo-TK pathway, a D-sulfoquinovose degradation pathway that produces sulfoacetate. Hydrolyzes sulfoacetyl-coenzyme A (sulfoacetyl-CoA) to produce sulfoacetate and CoA coupled with the phosphorylation of ADP to generate ATP. Cannot use succinate, acetate or 3-hydroxypropionate, and shows only residual activities with malonate and 3-sulfopropanoate. The polypeptide is ADP-forming sulfoacetate-CoA ligase subunit SqwK (Acholeplasma sp).